The following is a 541-amino-acid chain: Protein wntless homolog (541 aa).

Residues 1-15 are Cytoplasmic-facing; it reads MAGAIIENMSTKKLC. A helical transmembrane segment spans residues 16-36; the sequence is IVGGILLVFQIVAFLVGGLIA. At 37–232 the chain is on the lumenal side; that stretch reads PAPTTAVPYT…GIHQNGGFTK (196 aa). Residues 101-232 are interaction with Wnt proteins; that stretch reads MEMSPWFQFM…GIHQNGGFTK (132 aa). A helical transmembrane segment spans residues 233-253; it reads VWFAMKTFLTPSIFIIMVWYW. Topologically, residues 254 to 268 are cytoplasmic; it reads RRITMMSRPPVLLEK. The helical transmembrane segment at 269–289 threads the bilayer; it reads VIFALGISMTFINIPVEWFSI. Topologically, residues 290–303 are lumenal; the sequence is GFDWTWMLLFGDIR. The helical transmembrane segment at 304 to 324 threads the bilayer; it reads QGIFYAMLLSFWIIFCGEHMM. Residues 325-331 lie on the Cytoplasmic side of the membrane; that stretch reads DQHERNH. Residues 332–352 form a helical membrane-spanning segment; sequence IAGYWKQVGPIAVGSFCLFIF. At 353 to 380 the chain is on the lumenal side; the sequence is DMCERGVQLTNPFYSIWTTDVGTELAMA. The chain crosses the membrane as a helical span at residues 381–401; sequence FIIVAGICLCLYFLFLCFMVF. Topologically, residues 402–431 are cytoplasmic; the sequence is QVFRNISGKQSSLPAMSKVRRLHYEGLIFR. Residues 432 to 452 traverse the membrane as a helical segment; it reads FKFLMLITLACAAMTVIFFIV. The Lumenal portion of the chain corresponds to 453 to 471; it reads SQVSEGHWKWGGVTVQVSS. The chain crosses the membrane as a helical span at residues 472-492; the sequence is AFFTGIYGMWNLYVFALMFLY. Residues 493 to 541 are Cytoplasmic-facing; sequence APSHKNYGEDQSNGDLGVHSGEELQLTTTITHVDGPTEIYKLTRKEAQE.

Belongs to the wntless family. In terms of assembly, interacts with WNT3A. Interacts with WNT1, WNT3 and WNT5. In terms of processing, N-glycosylated. As to expression, expressed in the brain, skeletal muscle, heart muscle, lung, gut, liver, and kidney (at protein level). In the brain, expressed in the cortex, striatum, hippocampus and to a lesser extent in the cerebellum (at protein level). Expressed in kidney, lung, skin, intestine, brain, spinal cord, skeleton, eyes, excretion glands, tooth and palatal shelves. In the cerebellum, expressed in Purkinje cells.

The protein localises to the golgi apparatus membrane. It localises to the cytoplasmic vesicle membrane. It is found in the cell membrane. Its subcellular location is the endoplasmic reticulum membrane. The protein resides in the early endosome membrane. Functionally, regulates Wnt proteins sorting and secretion in a feedback regulatory mechanism. This reciprocal interaction plays a key role in the regulation of expression, subcellular location, binding and organelle-specific association of Wnt proteins. Also plays an important role in establishment of the anterior-posterior body axis formation during development. In Mus musculus (Mouse), this protein is Protein wntless homolog (Wls).